The following is a 181-amino-acid chain: UPF0340 protein OB2986 (181 aa).

It belongs to the UPF0340 family.

The sequence is that of UPF0340 protein OB2986 from Oceanobacillus iheyensis (strain DSM 14371 / CIP 107618 / JCM 11309 / KCTC 3954 / HTE831).